The following is a 156-amino-acid chain: Small ribosomal subunit protein uS7c (156 aa).

Belongs to the universal ribosomal protein uS7 family. As to quaternary structure, part of the 30S ribosomal subunit.

The protein localises to the plastid. Its subcellular location is the chloroplast. In terms of biological role, one of the primary rRNA binding proteins, it binds directly to 16S rRNA where it nucleates assembly of the head domain of the 30S subunit. This Pyropia yezoensis (Susabi-nori) protein is Small ribosomal subunit protein uS7c (rps7).